A 640-amino-acid polypeptide reads, in one-letter code: DNA topoisomerase 3 (640 aa).

The region spanning arginine 21–proline 175 is the Toprim domain. Positions 27, 137, and 139 each coordinate Mg(2+). In terms of domain architecture, Topo IA-type catalytic spans aspartate 189–phenylalanine 618. The active-site O-(5'-phospho-DNA)-tyrosine intermediate is the tyrosine 354.

It belongs to the type IA topoisomerase family. The cofactor is Mg(2+).

The catalysed reaction is ATP-independent breakage of single-stranded DNA, followed by passage and rejoining.. Introduces a single-strand break via transesterification at a target site in duplex DNA. Releases the supercoiling and torsional tension of DNA introduced during the DNA replication and transcription by transiently cleaving and rejoining one strand of the DNA duplex. The scissile phosphodiester is attacked by the catalytic tyrosine of the enzyme, resulting in the formation of a DNA-(5'-phosphotyrosyl)-enzyme intermediate and the expulsion of a 3'-OH DNA strand. In Candidozyma auris (Yeast), this protein is DNA topoisomerase 3 (TOP3).